The primary structure comprises 760 residues: ATP-dependent zinc metalloprotease FtsH (760 aa).

Residues 1–5 are Cytoplasmic-facing; sequence MNRKN. The chain crosses the membrane as a helical span at residues 6–26; that stretch reads VTRTITAIAVVVLLGWSFFYF. Residues 27-110 lie on the Extracellular side of the membrane; sequence SDDTRGYKPV…KVSTVVNQGS (84 aa). Residues 111 to 131 traverse the membrane as a helical segment; the sequence is ILGELLVYVLPLLLLVGLFVM. Residues 132 to 760 lie on the Cytoplasmic side of the membrane; the sequence is FSRMQGGARM…EVSRTKPAHG (629 aa). Residue 203 to 210 participates in ATP binding; it reads GPPGTGKT. Zn(2+) is bound at residue H425. The active site involves E426. Residues H429 and D501 each coordinate Zn(2+). A disordered region spans residues 616–760; that stretch reads DFGGRIPSDK…EVSRTKPAHG (145 aa). Positions 650 to 669 are enriched in low complexity; that stretch reads AFKAAIAQATQAAEAARSDA. Positions 740–750 are enriched in acidic residues; sequence GSDESSAEQDD.

In the central section; belongs to the AAA ATPase family. The protein in the C-terminal section; belongs to the peptidase M41 family. In terms of assembly, homohexamer. The cofactor is Zn(2+).

The protein resides in the cell membrane. Its function is as follows. Acts as a processive, ATP-dependent zinc metallopeptidase for both cytoplasmic and membrane proteins. Plays a role in the quality control of integral membrane proteins. This chain is ATP-dependent zinc metalloprotease FtsH, found in Mycobacterium tuberculosis (strain CDC 1551 / Oshkosh).